The sequence spans 515 residues: Methionine--tRNA ligase (515 aa).

A 'HIGH' region motif is present at residues 13–23 (AYPNGKPHIGH). Residues 300–304 (KMSKS) carry the 'KMSKS' region motif. K303 is a binding site for ATP.

The protein belongs to the class-I aminoacyl-tRNA synthetase family. MetG type 2B subfamily. As to quaternary structure, monomer.

It is found in the cytoplasm. It catalyses the reaction tRNA(Met) + L-methionine + ATP = L-methionyl-tRNA(Met) + AMP + diphosphate. In terms of biological role, is required not only for elongation of protein synthesis but also for the initiation of all mRNA translation through initiator tRNA(fMet) aminoacylation. The chain is Methionine--tRNA ligase from Brucella melitensis biotype 1 (strain ATCC 23456 / CCUG 17765 / NCTC 10094 / 16M).